The primary structure comprises 359 residues: Protein RecA (359 aa).

74 to 81 (GPESSGKT) serves as a coordination point for ATP.

It belongs to the RecA family.

The protein resides in the cytoplasm. Can catalyze the hydrolysis of ATP in the presence of single-stranded DNA, the ATP-dependent uptake of single-stranded DNA by duplex DNA, and the ATP-dependent hybridization of homologous single-stranded DNAs. It interacts with LexA causing its activation and leading to its autocatalytic cleavage. The chain is Protein RecA from Anaplasma marginale (strain St. Maries).